The sequence spans 2025 residues: E3 ubiquitin-protein ligase TRIP12 (2025 aa).

Residues 1-10 are compositionally biased toward polar residues; sequence MSNRPNNNPG. The interval 1–404 is disordered; the sequence is MSNRPNNNPG…SGESESDDSE (404 aa). S2 bears the N-acetylserine mark. S12 is modified (phosphoserine). Over residues 18-27 the composition is skewed to polar residues; it reads RNTAGAQPQD. Residues 48-70 show a composition bias toward basic and acidic residues; sequence DPDRANTSERQKTGQVPKKDNSR. S77, S85, and S100 each carry phosphoserine. A compositionally biased stretch (polar residues) spans 78-88; sequence PDYNRTNSPSS. The segment covering 119 to 132 has biased composition (polar residues); the sequence is EQQLKSAQLPSTSK. 2 stretches are compositionally biased toward low complexity: residues 154–166 and 177–215; these read SSCV…SEST and KLAS…ASST. Residue K181 is modified to N6-acetyllysine. The span at 280 to 290 shows a compositional bias: polar residues; it reads PGSSKSETSKP. Phosphoserine is present on residues S310 and S312. Polar residues predominate over residues 326-338; that stretch reads QKTTGSCASTSRR. Residues 346–358 are compositionally biased toward basic and acidic residues; sequence GAAEARRQEKMAD. The span at 360–371 shows a compositional bias: polar residues; it reads ESNQETVNSSAA. Residues 379–397 are compositionally biased toward low complexity; sequence GAAASSSVAGAVGMTTSGE. In terms of domain architecture, WWE spans 755–869; that stretch reads MLKKGNAQNT…DPELAKSFIK (115 aa). The interval 970 to 1077 is disordered; sequence ESLLTSPPKA…QSPKSSFLAS (108 aa). Phosphoserine is present on S975. The span at 983 to 1006 shows a compositional bias: low complexity; the sequence is GSGSLGSTTPASSGTATAATNASA. 2 positions are modified to phosphoserine: S1024 and S1030. Positions 1034–1047 are enriched in basic residues; it reads KRKRLPKRGPRRPK. S1049 carries the phosphoserine modification. A compositionally biased stretch (basic and acidic residues) spans 1050–1059; sequence PPRDDDKVDN. Low complexity predominate over residues 1062 to 1073; that stretch reads KSPTTTQSPKSS. S1063, S1350, S1355, S1362, and S1409 each carry phosphoserine. A Phosphothreonine modification is found at T1410. 2 disordered regions span residues 1441 to 1466 and 1601 to 1620; these read TKDC…NAKK and TNPE…PRLD. Position 1458 is an N6-acetyllysine (K1458). S1460 is modified (phosphoserine). A K-box region spans residues 1529–1603; it reads EIIPTSEFIN…AMQRLLDTNP (75 aa). The 108-residue stretch at 1918–2025 folds into the HECT domain; sequence PDHGYTHDSR…REGQQSFHLS (108 aa). The active-site Glycyl thioester intermediate is C1992.

It belongs to the UPL family. K-HECT subfamily. Interacts with MYC; leading to disrupt interaction with isoform p19ARF/ARF of CDKN2A. Interacts with TRADD; leading to disrupt interaction with isoform p19ARF/ARF of CDKN2A. Interacts with SMARCC1; leading to disrupt interaction with SMARCE1.

It is found in the nucleus. The protein localises to the nucleoplasm. The enzyme catalyses S-ubiquitinyl-[E2 ubiquitin-conjugating enzyme]-L-cysteine + [acceptor protein]-L-lysine = [E2 ubiquitin-conjugating enzyme]-L-cysteine + N(6)-ubiquitinyl-[acceptor protein]-L-lysine.. Its pathway is protein modification; protein ubiquitination. Its function is as follows. E3 ubiquitin-protein ligase involved in ubiquitin fusion degradation (UFD) pathway and regulation of DNA repair. Part of the ubiquitin fusion degradation (UFD) pathway, a process that mediates ubiquitination of protein at their N-terminus, regardless of the presence of lysine residues in target proteins. Acts as a key regulator of DNA damage response by acting as a suppressor of RNF168, an E3 ubiquitin-protein ligase that promotes accumulation of 'Lys-63'-linked histone H2A and H2AX at DNA damage sites, thereby acting as a guard against excessive spreading of ubiquitinated chromatin at damaged chromosomes. In normal cells, mediates ubiquitination and degradation of isoform p19ARF/ARF of CDKN2A, a lysine-less tumor suppressor required for p53/TP53 activation under oncogenic stress. In cancer cells, however, isoform p19ARF/ARF and TRIP12 are located in different cell compartments, preventing isoform p19ARF/ARF ubiquitination and degradation. Does not mediate ubiquitination of isoform p16-INK4a of CDKN2A. Also catalyzes ubiquitination of NAE1 and SMARCE1, leading to their degradation. Ubiquitination and degradation of target proteins is regulated by interaction with proteins such as MYC, TRADD or SMARCC1, which disrupt the interaction between TRIP12 and target proteins. Mediates ubiquitination of ASXL1: following binding to N(6)-methyladenosine methylated DNA, ASXL1 is ubiquitinated by TRIP12, leading to its degradation and subsequent inactivation of the PR-DUB complex. The polypeptide is E3 ubiquitin-protein ligase TRIP12 (Trip12) (Mus musculus (Mouse)).